The sequence spans 84 residues: ATP synthase subunit c (84 aa).

2 helical membrane passes run 1-21 and 53-73; these read MLAW…ALVG and LLFA…VALI.

Belongs to the ATPase C chain family. As to quaternary structure, F-type ATPases have 2 components, F(1) - the catalytic core - and F(0) - the membrane proton channel. F(1) has five subunits: alpha(3), beta(3), gamma(1), delta(1), epsilon(1). F(0) has three main subunits: a(1), b(2) and c(10-14). The alpha and beta chains form an alternating ring which encloses part of the gamma chain. F(1) is attached to F(0) by a central stalk formed by the gamma and epsilon chains, while a peripheral stalk is formed by the delta and b chains.

It is found in the cell inner membrane. In terms of biological role, f(1)F(0) ATP synthase produces ATP from ADP in the presence of a proton or sodium gradient. F-type ATPases consist of two structural domains, F(1) containing the extramembraneous catalytic core and F(0) containing the membrane proton channel, linked together by a central stalk and a peripheral stalk. During catalysis, ATP synthesis in the catalytic domain of F(1) is coupled via a rotary mechanism of the central stalk subunits to proton translocation. Functionally, key component of the F(0) channel; it plays a direct role in translocation across the membrane. A homomeric c-ring of between 10-14 subunits forms the central stalk rotor element with the F(1) delta and epsilon subunits. The sequence is that of ATP synthase subunit c from Dictyoglomus thermophilum (strain ATCC 35947 / DSM 3960 / H-6-12).